Here is a 493-residue protein sequence, read N- to C-terminus: GTPase Der (493 aa).

The EngA-type G 1 domain occupies 3–166; sequence PVIALVGRPN…EALGIFPKDN (164 aa). GTP contacts are provided by residues 9–16, 56–60, and 118–121; these read GRPNVGKS, DTGGI, and NKVD. Residues 167-184 are compositionally biased toward acidic residues; that stretch reads VEEEGEGEPASEEVAEGE. A disordered region spans residues 167 to 195; it reads VEEEGEGEPASEEVAEGEEPTRIPGPSEK. An EngA-type G 2 domain is found at 198-371; that stretch reads IKIAIIGRPN…SVQESFRSAV (174 aa). Residues 204–211, 251–255, and 316–319 contribute to the GTP site; these read GRPNVGKS, DTAGV, and NKWD. One can recognise a KH-like domain in the interval 372–456; sequence TRWPTSRLTS…PIRIEYKGGE (85 aa). A compositionally biased stretch (basic and acidic residues) spans 454 to 463; that stretch reads GGENPYEGKK. Residues 454-493 form a disordered region; that stretch reads GGENPYEGKKNSLTARQVNKKRRLMSHHKKAEKKKKDKRR. The segment covering 471–493 has biased composition (basic residues); sequence VNKKRRLMSHHKKAEKKKKDKRR.

It belongs to the TRAFAC class TrmE-Era-EngA-EngB-Septin-like GTPase superfamily. EngA (Der) GTPase family. As to quaternary structure, associates with the 50S ribosomal subunit.

Its function is as follows. GTPase that plays an essential role in the late steps of ribosome biogenesis. This is GTPase Der from Pseudomonas aeruginosa (strain LESB58).